Consider the following 1117-residue polypeptide: WD repeat and HMG-box DNA-binding protein 1 (1117 aa).

WD repeat units lie at residues 11 to 50 (GHTEGHTEVCFDDSGSYIVTCGSDGDVRMWEDLDDDDPKS), 52 to 91 (NVGEKAFSCALKNGKLVTAVSNNTVQVYTFPEGVPDGILT), 93 to 131 (FTTNANHVVFNGAGNKIAAGSSDFLVKVVDVMDNSQQQT), 134 to 173 (GHDAPVLSLSFDPKDIFLASASCDGTVRVWNISDQTCAVS), 184 to 223 (VNAKSICRLAWQPKAGKLLAVPVEKSVKLYRRETWSNPFD), 228 to 267 (SISQTLNIVTWSPCGQYLAAGAINGLIVVWNVETKDCMER), and 271 to 310 (EKGYAICGLAWHPTCSRICYTDVEGNLGVLENVCDLSGKV). A phosphoserine mark is found at Ser333 and Ser377. Lys390 is covalently cross-linked (Glycyl lysine isopeptide (Lys-Gly) (interchain with G-Cter in SUMO2)). Lys664 carries the N6-acetyllysine modification. Positions 816 to 885 (LAETQSEEEK…NLFQSANSSD (70 aa)) are disordered. Thr819 is subject to Phosphothreonine. At Ser821 the chain carries Phosphoserine. The segment covering 861–872 (DTVSEEKPESHN) has biased composition (basic and acidic residues). Polar residues predominate over residues 873–885 (HGQNLFQSANSSD). 2 positions are modified to phosphoserine: Ser910 and Ser923. Positions 911–1005 (SKEPAVSANS…AVCLQNSENQ (95 aa)) are disordered. The span at 917 to 943 (SANSTRSANILDSMNKSSRKSTSLNRM) shows a compositional bias: polar residues. An N6-acetyllysine modification is found at Lys953. The span at 962–974 (KQASAASYFQKRT) shows a compositional bias: polar residues. The span at 975–987 (PQADKTEEVKENP) shows a compositional bias: basic and acidic residues. Positions 988-1004 (KSSSSDAPAVCLQNSEN) are enriched in polar residues. The HMG box DNA-binding region spans 1004-1073 (NQRPKTGFQM…SDGAEAKKRK (70 aa)). Ser1030 bears the Phosphoserine mark. The segment at 1054–1074 (WTNKAKGETASDGAEAKKRKR) is disordered. Lys1116 participates in a covalent cross-link: Glycyl lysine isopeptide (Lys-Gly) (interchain with G-Cter in SUMO1); alternate. Residue Lys1116 forms a Glycyl lysine isopeptide (Lys-Gly) (interchain with G-Cter in SUMO2); alternate linkage.

In terms of assembly, trimer. Interacts with the polymerase alpha catalytic subunit POLA1. Interacts with MCM10. Interacts with DNA2. Interacts with CDC45 and GINS2 subunit of GINS complex; these interactions associate WDHD1 with the CMG helicase complex.

It is found in the nucleus. Its subcellular location is the nucleoplasm. Functionally, core replisome component that acts as a replication initiation factor. Binds directly to the CMG complex and functions as a hub to recruit additional proteins to the replication fork. The sequence is that of WD repeat and HMG-box DNA-binding protein 1 (Wdhd1) from Mus musculus (Mouse).